Consider the following 301-residue polypeptide: tRNA uridine(34) hydroxylase (301 aa).

A Rhodanese domain is found at 120–214 (SAPDVAVIDT…YLEDVPEDQS (95 aa)). C174 (cysteine persulfide intermediate) is an active-site residue.

The protein belongs to the TrhO family.

The catalysed reaction is uridine(34) in tRNA + AH2 + O2 = 5-hydroxyuridine(34) in tRNA + A + H2O. Catalyzes oxygen-dependent 5-hydroxyuridine (ho5U) modification at position 34 in tRNAs. This is tRNA uridine(34) hydroxylase from Jannaschia sp. (strain CCS1).